We begin with the raw amino-acid sequence, 81 residues long: Large ribosomal subunit protein bL31B (81 aa).

It belongs to the bacterial ribosomal protein bL31 family. Type B subfamily. In terms of assembly, part of the 50S ribosomal subunit.

This chain is Large ribosomal subunit protein bL31B, found in Bacillus licheniformis (strain ATCC 14580 / DSM 13 / JCM 2505 / CCUG 7422 / NBRC 12200 / NCIMB 9375 / NCTC 10341 / NRRL NRS-1264 / Gibson 46).